The primary structure comprises 199 residues: Holliday junction branch migration complex subunit RuvA (199 aa).

Residues 1–64 (MIGRITGILL…EDGHFLYGFA (64 aa)) form a domain I region. Positions 65–143 (SADERAAFRQ…RALPGFGAST (79 aa)) are domain II. A flexible linker region spans residues 144 to 152 (VPGAAAQPA). Positions 152 to 199 (ADSRSDILNALLALGYSDKEAQSALKAIPPETGVSDGIRQALKLLSKA) are domain III.

This sequence belongs to the RuvA family. In terms of assembly, homotetramer. Forms an RuvA(8)-RuvB(12)-Holliday junction (HJ) complex. HJ DNA is sandwiched between 2 RuvA tetramers; dsDNA enters through RuvA and exits via RuvB. An RuvB hexamer assembles on each DNA strand where it exits the tetramer. Each RuvB hexamer is contacted by two RuvA subunits (via domain III) on 2 adjacent RuvB subunits; this complex drives branch migration. In the full resolvosome a probable DNA-RuvA(4)-RuvB(12)-RuvC(2) complex forms which resolves the HJ.

It is found in the cytoplasm. In terms of biological role, the RuvA-RuvB-RuvC complex processes Holliday junction (HJ) DNA during genetic recombination and DNA repair, while the RuvA-RuvB complex plays an important role in the rescue of blocked DNA replication forks via replication fork reversal (RFR). RuvA specifically binds to HJ cruciform DNA, conferring on it an open structure. The RuvB hexamer acts as an ATP-dependent pump, pulling dsDNA into and through the RuvAB complex. HJ branch migration allows RuvC to scan DNA until it finds its consensus sequence, where it cleaves and resolves the cruciform DNA. This is Holliday junction branch migration complex subunit RuvA from Aromatoleum aromaticum (strain DSM 19018 / LMG 30748 / EbN1) (Azoarcus sp. (strain EbN1)).